Consider the following 758-residue polypeptide: 5-methyltetrahydropteroyltriglutamate--homocysteine methyltransferase (758 aa).

5-methyltetrahydropteroyltri-L-glutamate-binding positions include 16 to 19 (RELK) and K116. Residues 436–438 (IGS) and E489 contribute to the L-homocysteine site. L-methionine-binding positions include 436 to 438 (IGS) and E489. 5-methyltetrahydropteroyltri-L-glutamate-binding positions include 520–521 (RC) and W566. Residue D604 participates in L-homocysteine binding. L-methionine is bound at residue D604. Residue E610 coordinates 5-methyltetrahydropteroyltri-L-glutamate. H646, C648, and E670 together coordinate Zn(2+). H699 (proton donor) is an active-site residue. Residue C731 participates in Zn(2+) binding.

Belongs to the vitamin-B12 independent methionine synthase family. The cofactor is Zn(2+).

The catalysed reaction is 5-methyltetrahydropteroyltri-L-glutamate + L-homocysteine = tetrahydropteroyltri-L-glutamate + L-methionine. The protein operates within amino-acid biosynthesis; L-methionine biosynthesis via de novo pathway; L-methionine from L-homocysteine (MetE route): step 1/1. Catalyzes the transfer of a methyl group from 5-methyltetrahydrofolate to homocysteine resulting in methionine formation. In Xylella fastidiosa (strain 9a5c), this protein is 5-methyltetrahydropteroyltriglutamate--homocysteine methyltransferase.